Here is a 375-residue protein sequence, read N- to C-terminus: MSASAPAAEGEGTPTQPASEKEPEMPGPREESEEEEDEDDEEEEEEEKEKSLIVEGKREKKKVERLTMQVSSLQREPFTIAQGKGQKLCEIERIHFFLSKKKTDELRNLHKLLYNRPGTVSSLKKNVGQFSGFPFEKGSVQYKKKEEMLKKFRNAMLKSICEVLDLERSGVNSELVKRILNFLMHPKPSGKPLPKSKKTCSKGSKKERNSSGMARKAKRTKCPEILSDESSSDEDEKKNKEESSDDEDKESEEEPPKKTAKREKPKQKATSKSKKSVKSANVKKADSSTTKKNQNSSKKESESEDSSDDEPLIKKLKKPPTDEELKETIKKLLASANLEEVTMKQICKKVYENYPTYDLTERKDFIKTTVKELIS.

Positions 1 to 61 (MSASAPAAEG…LIVEGKREKK (61 aa)) are disordered. Ser-2 is subject to N-acetylserine. Residues Thr-13 and Thr-15 each carry the phosphothreonine modification. Ser-19 is subject to Phosphoserine. Positions 19–30 (SEKEPEMPGPRE) are enriched in basic and acidic residues. Residues 31–47 (ESEEEEDEDDEEEEEEE) are compositionally biased toward acidic residues. Ser-32 carries the phosphoserine; by CK2 modification. The segment covering 48–61 (KEKSLIVEGKREKK) has biased composition (basic and acidic residues). Phosphoserine occurs at positions 51, 72, 121, and 122. Residues 149-183 (LKKFRNAMLKSICEVLDLERSGVNSELVKRILNFL) form the SAP domain. Residue Ser-159 is modified to Phosphoserine; by CK2. Residues 184 to 325 (MHPKPSGKPL…LKKPPTDEEL (142 aa)) form a disordered region. A compositionally biased stretch (basic residues) spans 194–203 (PKSKKTCSKG). Thr-199 carries the post-translational modification Phosphothreonine; by CK2. A phosphoserine; by CK2 mark is found at Ser-201 and Ser-204. The Nuclear localization signal motif lies at 205 to 221 (KKERNSSGMARKAKRTK). 5 positions are modified to phosphoserine: Ser-210, Ser-227, Ser-230, Ser-231, and Ser-232. A phosphoserine; by CK2 mark is found at Ser-243, Ser-244, and Ser-251. Positions 243–253 (SSDDEDKESEE) are enriched in acidic residues. Basic residues predominate over residues 258–277 (KTAKREKPKQKATSKSKKSV). Residues 278 to 296 (KSANVKKADSSTTKKNQNS) are compositionally biased toward low complexity. Ser-279 is subject to ADP-ribosylserine. Ser-287 and Ser-288 each carry phosphoserine; by CK2. Phosphothreonine; by CK2 occurs at positions 289 and 290. Ser-296, Ser-301, Ser-303, Ser-306, and Ser-307 each carry phosphoserine; by CK2. A DEK-C domain is found at 319–375 (PPTDEELKETIKKLLASANLEEVTMKQICKKVYENYPTYDLTERKDFIKTTVKELIS). 2 DNA-binding regions span residues 337–351 (NLEE…KKVY) and 367–371 (KTTVK).

Found in a mRNA splicing-dependent exon junction complex (EJC) with DEK, RBM8A, RNPS1, SRRM1 and ALYREF/THOC4. Interacts with histones H2A, H2B, H3, H4, acetylated histone H4, non-phosphorylated DAXX and HDAC2. Component of the B-WICH complex, at least composed of SMARCA5/SNF2H, BAZ1B/WSTF, SF3B1, DEK, MYO1C, ERCC6, MYBBP1A and DDX21. Binds DNA. Post-translationally, phosphorylated by CK2. Phosphorylation fluctuates during the cell cycle with a moderate peak during G(1) phase, and weakens the binding of DEK to DNA. Ubiquitous. Expressed at relatively high levels.

The protein resides in the nucleus. Its function is as follows. Involved in chromatin organization. The chain is Protein DEK (DEK) from Homo sapiens (Human).